The sequence spans 316 residues: GPI-specific phospholipase A2-like PGAP3 (316 aa).

The first 18 residues, 1-18, serve as a signal peptide directing secretion; the sequence is MAPFLVLFLAGVVAASRG. The Lumenal portion of the chain corresponds to 19-93; sequence DREPVYRDCV…QFHGKWPFSR (75 aa). A glycan (N-linked (GlcNAc...) asparagine) is linked at Asn35. The helical transmembrane segment at 94 to 114 threads the bilayer; that stretch reads FLFFQEPASALASFLNGVASL. Residues 115-132 are Cytoplasmic-facing; the sequence is LMLLRYRSSVPSSCQMYR. A helical transmembrane segment spans residues 133 to 153; it reads TCLAFSMVSVNAWFWSTIFHT. The Lumenal segment spans residues 154–163; the sequence is RDTALTEKMD. The chain crosses the membrane as a helical span at residues 164–180; it reads YFCASSVILHSIYLCCM. Residues 181–182 are Cytoplasmic-facing; the sequence is RT. The helical transmembrane segment at 183–203 threads the bilayer; that stretch reads FGLQYPSIANGFGAFLVLLFA. The Lumenal segment spans residues 204–218; that stretch reads CHVSYLTLGRFDYSY. A helical transmembrane segment spans residues 219–239; the sequence is NMAANTGFGVLNLMWWLAWCF. Residues 240 to 251 are Cytoplasmic-facing; it reads RRRFHQPYLWKC. The chain crosses the membrane as a helical span at residues 252 to 272; sequence VLVVISLQSLALLELLDFPPV. Residue Met273 is a topological domain, lumenal. A helical transmembrane segment spans residues 274–293; the sequence is WILDAHALWHFSTVPLHFLF. Over 294–316 the chain is Cytoplasmic; that stretch reads YSFLKDDSLYLLKINHDDIPKLD.

The protein belongs to the PGAP3 family.

The protein localises to the golgi apparatus membrane. Its function is as follows. Involved in the fatty acid remodeling steps of GPI-anchor maturation where the unsaturated acyl chain at sn-2 of inositol phosphate is replaced by a saturated stearoyl chain. May catalyze the first step of the fatty acid remodeling, by removing the unsaturated acyl chain at sn-2 of inositol phosphate, generating a lyso-GPI intermediate. The fatty acid remodeling steps is critical for the integration of GPI-APs into lipid rafts. The sequence is that of GPI-specific phospholipase A2-like PGAP3 from Xenopus tropicalis (Western clawed frog).